We begin with the raw amino-acid sequence, 253 residues long: Tetraspanin-11 (253 aa).

Helical transmembrane passes span L19–V39, I63–I83, L90–L110, and L220–L240.

It belongs to the tetraspanin (TM4SF) family.

Its subcellular location is the membrane. This chain is Tetraspanin-11 (TSPAN11), found in Bos taurus (Bovine).